Consider the following 280-residue polypeptide: 4-diphosphocytidyl-2-C-methyl-D-erythritol kinase (280 aa).

Lys-8 is an active-site residue. 91-101 (PVAAGLAGGSA) contributes to the ATP binding site. Asp-133 is an active-site residue.

The protein belongs to the GHMP kinase family. IspE subfamily.

The enzyme catalyses 4-CDP-2-C-methyl-D-erythritol + ATP = 4-CDP-2-C-methyl-D-erythritol 2-phosphate + ADP + H(+). It functions in the pathway isoprenoid biosynthesis; isopentenyl diphosphate biosynthesis via DXP pathway; isopentenyl diphosphate from 1-deoxy-D-xylulose 5-phosphate: step 3/6. In terms of biological role, catalyzes the phosphorylation of the position 2 hydroxy group of 4-diphosphocytidyl-2C-methyl-D-erythritol. This is 4-diphosphocytidyl-2-C-methyl-D-erythritol kinase from Clostridium acetobutylicum (strain ATCC 824 / DSM 792 / JCM 1419 / IAM 19013 / LMG 5710 / NBRC 13948 / NRRL B-527 / VKM B-1787 / 2291 / W).